Consider the following 547-residue polypeptide: RING finger protein ETP1 homolog (547 aa).

An RING-type zinc finger spans residues 208 to 248; the sequence is CVVCLERMDSSITGLITIVCQHTFHCPCLQKWGNSSCPVCR. A UBP-type; degenerate zinc finger spans residues 245-338; that stretch reads PVCRYTQKVQ…GKLVELSTDG (94 aa). Zn(2+) is bound by residues C262, C265, C274, C277, C282, H289, H293, and H299. Residues 514-523 are compositionally biased toward polar residues; sequence LPNNSTVRSN. Positions 514-547 are disordered; sequence LPNNSTVRSNSVKSKKKKKKKPVVPSSSGSLGTD. The span at 526–535 shows a compositional bias: basic residues; that stretch reads KSKKKKKKKP.

Its subcellular location is the cytoplasm. May act as a cytoplasmic retention protein with a role in regulating nuclear transport. The protein is RING finger protein ETP1 homolog of Schizosaccharomyces pombe (strain 972 / ATCC 24843) (Fission yeast).